Consider the following 1038-residue polypeptide: Probable ubiquitin conjugation factor E4 (1038 aa).

2 disordered regions span residues 430 to 459 and 1010 to 1038; these read ANDAGRENGNESRLLQSKEATSSSSNASGQ and SHQSKKRTSGEDSSNKERIQTTNSDMLID. Positions 446-459 are enriched in low complexity; sequence SKEATSSSSNASGQ. The U-box domain maps to 940-1014; the sequence is EIPDEFLDPI…DEFVKSHQSK (75 aa). Basic and acidic residues predominate over residues 1017–1028; sequence TSGEDSSNKERI. The segment covering 1029 to 1038 has biased composition (polar residues); it reads QTTNSDMLID.

This sequence belongs to the ubiquitin conjugation factor E4 family.

It is found in the cytoplasm. It localises to the nucleus. It carries out the reaction S-ubiquitinyl-[E2 ubiquitin-conjugating enzyme]-L-cysteine + [acceptor protein]-L-lysine = [E2 ubiquitin-conjugating enzyme]-L-cysteine + N(6)-ubiquitinyl-[acceptor protein]-L-lysine.. Its pathway is protein modification; protein ubiquitination. Its function is as follows. Ubiquitin-protein ligase that may function as an E3 ligase in conjunction with specific E1 and E2 ligases. May also function as an E4 ligase mediating the assembly of polyubiquitin chain assembly on substrates monoubiquitinated by another E3 ubiquitin ligase. In Arabidopsis thaliana (Mouse-ear cress), this protein is Probable ubiquitin conjugation factor E4 (PUB1).